Consider the following 544-residue polypeptide: CTP synthase (544 aa).

The amidoligase domain stretch occupies residues 1 to 265 (MTKFIFVTGG…DNIITEQLQL (265 aa)). Ser-13 is a binding site for CTP. Residue Ser-13 participates in UTP binding. ATP-binding positions include 14 to 19 (SLGKGI) and Asp-71. Positions 71 and 139 each coordinate Mg(2+). CTP-binding positions include 146–148 (DIE), 186–191 (KTKPTQ), and Lys-222. UTP is bound by residues 186 to 191 (KTKPTQ) and Lys-222. One can recognise a Glutamine amidotransferase type-1 domain in the interval 290 to 544 (KIAMVGKYVD…VKAALNNKKA (255 aa)). Position 353 (Gly-353) interacts with L-glutamine. Cys-380 serves as the catalytic Nucleophile; for glutamine hydrolysis. L-glutamine is bound by residues 381–384 (LGMQ), Glu-404, and Arg-471. Residues His-517 and Glu-519 contribute to the active site.

The protein belongs to the CTP synthase family. As to quaternary structure, homotetramer.

It catalyses the reaction UTP + L-glutamine + ATP + H2O = CTP + L-glutamate + ADP + phosphate + 2 H(+). It carries out the reaction L-glutamine + H2O = L-glutamate + NH4(+). The enzyme catalyses UTP + NH4(+) + ATP = CTP + ADP + phosphate + 2 H(+). The protein operates within pyrimidine metabolism; CTP biosynthesis via de novo pathway; CTP from UDP: step 2/2. Allosterically activated by GTP, when glutamine is the substrate; GTP has no effect on the reaction when ammonia is the substrate. The allosteric effector GTP functions by stabilizing the protein conformation that binds the tetrahedral intermediate(s) formed during glutamine hydrolysis. Inhibited by the product CTP, via allosteric rather than competitive inhibition. In terms of biological role, catalyzes the ATP-dependent amination of UTP to CTP with either L-glutamine or ammonia as the source of nitrogen. Regulates intracellular CTP levels through interactions with the four ribonucleotide triphosphates. In Neisseria gonorrhoeae (strain ATCC 700825 / FA 1090), this protein is CTP synthase.